The sequence spans 431 residues: MSSIEPWPAPFAPTPVHATVTVPGSKSQTNRTLVLAALAAAQGQGSSTITGALRSRDTDLMIEALQTLGLRVDGTGSELTVSGRIRPCPEARVDCGLAGTVLRFAPPLAALSAAPITFDGDEQARARPIAPLLDALRGLGVPVDGAGLPFRVQGTGSVAGGTVAIDASASSQFVSGLLLSGASFTDGLTVQHTGSELPSAPHIAMTVQMLRQAGVDVDDSIPNRWLVRPGALRPRHWDAEPDLTNAVAFLAAAVVTGGTVTITGWPADSVQPAKNILDILQTLNSTVRHIDSCLQVQGPQSYRGFDVDLRDVGELTPSVAALAALASPGSVSRLAGIAHLRGHETDRLAALSTEINRLGGNCEQTSDGLVITATPLRPGSWRAYADHRMAMAGAIVGLRVAGVEVDDIGATSKTLPEFPQLWTEMVEGSSG.

3-phosphoshikimate contacts are provided by K26, S27, and R31. K26 is a phosphoenolpyruvate binding site. Residues G99 and R127 each contribute to the phosphoenolpyruvate site. S170, S171, Q172, S199, E314, and H343 together coordinate 3-phosphoshikimate. Position 172 (Q172) interacts with phosphoenolpyruvate. Catalysis depends on E314, which acts as the Proton acceptor. Residues R347, R388, and K413 each contribute to the phosphoenolpyruvate site.

This sequence belongs to the EPSP synthase family. Monomer.

Its subcellular location is the cytoplasm. It carries out the reaction 3-phosphoshikimate + phosphoenolpyruvate = 5-O-(1-carboxyvinyl)-3-phosphoshikimate + phosphate. It participates in metabolic intermediate biosynthesis; chorismate biosynthesis; chorismate from D-erythrose 4-phosphate and phosphoenolpyruvate: step 6/7. Catalyzes the transfer of the enolpyruvyl moiety of phosphoenolpyruvate (PEP) to the 5-hydroxyl of shikimate-3-phosphate (S3P) to produce enolpyruvyl shikimate-3-phosphate and inorganic phosphate. The sequence is that of 3-phosphoshikimate 1-carboxyvinyltransferase from Mycobacterium ulcerans (strain Agy99).